The primary structure comprises 192 residues: E3 ubiquitin-protein ligase RNF185 (192 aa).

Residues 1–13 are compositionally biased toward polar residues; that stretch reads MASKGPSASASTE. The disordered stretch occupies residues 1 to 30; the sequence is MASKGPSASASTENSNAGGPSGSSNGTGES. Topologically, residues 1-130 are cytoplasmic; that stretch reads MASKGPSASA…GGFQGFGFGD (130 aa). Over residues 14–27 the composition is skewed to low complexity; it reads NSNAGGPSGSSNGT. The segment at 29-80 is required for ubiquitin ligase activity and protection against ER stress-induced cell death; the sequence is ESGGQDSTFECNICLDTAKDAVISLCGHLFCWPCLHQWLETRPNRQVCPVCK. Residues 39–80 form an RING-type zinc finger; sequence CNICLDTAKDAVISLCGHLFCWPCLHQWLETRPNRQVCPVCK. The tract at residues 90–123 is disordered; the sequence is PLYGRGSTGQQDPREKTPPRPQGQRPEPENRGGF. Residues 131–151 traverse the membrane as a helical segment; it reads GGFQMSFGIGAFPFGIFATAF. The Mitochondrial intermembrane segment spans residues 152 to 171; sequence NINDGRPPPAVPGTPQYVDE. Residues 172–192 form a helical membrane-spanning segment; the sequence is QFLSRLFLFVALVIMFWLLIA.

As to quaternary structure, interacts with ATG5 and BNIP1. In terms of tissue distribution, ubiquitously expressed with high expression in testis.

It localises to the mitochondrion outer membrane. The protein resides in the endoplasmic reticulum membrane. It carries out the reaction S-ubiquitinyl-[E2 ubiquitin-conjugating enzyme]-L-cysteine + [acceptor protein]-L-lysine = [E2 ubiquitin-conjugating enzyme]-L-cysteine + N(6)-ubiquitinyl-[acceptor protein]-L-lysine.. It participates in protein modification; protein ubiquitination. E3 ubiquitin-protein ligase that regulates selective mitochondrial autophagy by mediating 'Lys-63'-linked polyubiquitination of BNIP1. Acts in the endoplasmic reticulum (ER)-associated degradation (ERAD) pathway, which targets misfolded proteins that accumulate in the endoplasmic reticulum (ER) for ubiquitination and subsequent proteasome-mediated degradation. Protects cells from ER stress-induced apoptosis. Responsible for the cotranslational ubiquitination and degradation of CFTR in the ERAD pathway. Also acts as a regulator of the innate antiviral response by catalyzing 'Lys-27'-linked polyubiquitination of CGAS, thereby promoting CGAS cyclic GMP-AMP synthase activity. Preferentially associates with the E2 enzymes UBE2J1 and UBE2J2. This chain is E3 ubiquitin-protein ligase RNF185 (Rnf185), found in Mus musculus (Mouse).